The sequence spans 913 residues: Protein translocase subunit SecA (913 aa).

ATP is bound by residues Gln87, 105–109, and Asp512; that span reads GEGKT. 4 residues coordinate Zn(2+): Cys897, Cys899, Cys908, and His909.

This sequence belongs to the SecA family. As to quaternary structure, monomer and homodimer. Part of the essential Sec protein translocation apparatus which comprises SecA, SecYEG and auxiliary proteins SecDF-YajC and YidC. Zn(2+) is required as a cofactor.

The protein resides in the cell inner membrane. It localises to the cytoplasm. The enzyme catalyses ATP + H2O + cellular proteinSide 1 = ADP + phosphate + cellular proteinSide 2.. Functionally, part of the Sec protein translocase complex. Interacts with the SecYEG preprotein conducting channel. Has a central role in coupling the hydrolysis of ATP to the transfer of proteins into and across the cell membrane, serving both as a receptor for the preprotein-SecB complex and as an ATP-driven molecular motor driving the stepwise translocation of polypeptide chains across the membrane. This is Protein translocase subunit SecA from Pseudomonas fluorescens (strain ATCC BAA-477 / NRRL B-23932 / Pf-5).